The chain runs to 347 residues: Ferredoxin--NADP reductase 1 (347 aa).

Positions 26, 45, 53, 58, 98, 133, 298, and 339 each coordinate FAD.

This sequence belongs to the ferredoxin--NADP reductase type 2 family. Homodimer. FAD is required as a cofactor.

It carries out the reaction 2 reduced [2Fe-2S]-[ferredoxin] + NADP(+) + H(+) = 2 oxidized [2Fe-2S]-[ferredoxin] + NADPH. The chain is Ferredoxin--NADP reductase 1 from Chloroherpeton thalassium (strain ATCC 35110 / GB-78).